The primary structure comprises 431 residues: Enolase (431 aa).

Q166 lines the (2R)-2-phosphoglycerate pocket. The Proton donor role is filled by E208. Positions 245, 289, and 316 each coordinate Mg(2+). (2R)-2-phosphoglycerate contacts are provided by K341, R370, S371, and K392. K341 acts as the Proton acceptor in catalysis.

Belongs to the enolase family. Requires Mg(2+) as cofactor.

Its subcellular location is the cytoplasm. The protein localises to the secreted. It localises to the cell surface. It carries out the reaction (2R)-2-phosphoglycerate = phosphoenolpyruvate + H2O. The protein operates within carbohydrate degradation; glycolysis; pyruvate from D-glyceraldehyde 3-phosphate: step 4/5. Catalyzes the reversible conversion of 2-phosphoglycerate (2-PG) into phosphoenolpyruvate (PEP). It is essential for the degradation of carbohydrates via glycolysis. The chain is Enolase from Ruminiclostridium cellulolyticum (strain ATCC 35319 / DSM 5812 / JCM 6584 / H10) (Clostridium cellulolyticum).